The sequence spans 780 residues: Endonuclease MutS2 (780 aa).

Residue 334–341 (GPNAGGKT) participates in ATP binding. The Smr domain maps to 706–780 (IDIRGMRSVD…GGSGKTIVEI (75 aa)).

It belongs to the DNA mismatch repair MutS family. MutS2 subfamily. Homodimer. Binds to stalled ribosomes, contacting rRNA.

Endonuclease that is involved in the suppression of homologous recombination and thus may have a key role in the control of bacterial genetic diversity. Its function is as follows. Acts as a ribosome collision sensor, splitting the ribosome into its 2 subunits. Detects stalled/collided 70S ribosomes which it binds and splits by an ATP-hydrolysis driven conformational change. Acts upstream of the ribosome quality control system (RQC), a ribosome-associated complex that mediates the extraction of incompletely synthesized nascent chains from stalled ribosomes and their subsequent degradation. Probably generates substrates for RQC. The sequence is that of Endonuclease MutS2 from Borreliella burgdorferi (strain ATCC 35210 / DSM 4680 / CIP 102532 / B31) (Borrelia burgdorferi).